A 150-amino-acid polypeptide reads, in one-letter code: MSRRDDTKADPIYRNRLVNMLVNRILKHGKKSLAYRILYNAMMNIRRETKYNPLFILRQAIRQVTPNVTIETRRVGGSTYRVPTEIESTQGKALAIRWLLEASRKRPGRNIASKSSSELMDAAENSGNAIRKREETHRMAEANRAFAHLR.

It belongs to the universal ribosomal protein uS7 family. In terms of assembly, part of the 30S ribosomal subunit.

The protein localises to the plastid. It is found in the chloroplast. Its function is as follows. One of the primary rRNA binding proteins, it binds directly to 16S rRNA where it nucleates assembly of the head domain of the 30S subunit. This Huperzia lucidula (Shining clubmoss) protein is Small ribosomal subunit protein uS7c (rps7).